The sequence spans 214 residues: Outer-membrane lipoprotein LolB (214 aa).

Residues 1-25 (MNNLKRFTKSIFSCIALSGLLFLGG) form the signal peptide. Residue C26 is the site of N-palmitoyl cysteine attachment. C26 is lipidated: S-diacylglycerol cysteine.

It belongs to the LolB family. As to quaternary structure, monomer.

Its subcellular location is the cell outer membrane. In terms of biological role, plays a critical role in the incorporation of lipoproteins in the outer membrane after they are released by the LolA protein. This is Outer-membrane lipoprotein LolB from Shewanella sp. (strain MR-7).